The sequence spans 148 residues: Putative nickel-responsive regulator (148 aa).

Ni(2+) is bound by residues histidine 88, histidine 99, histidine 101, and cysteine 107.

Belongs to the transcriptional regulatory CopG/NikR family. Requires Ni(2+) as cofactor.

Transcriptional regulator. This is Putative nickel-responsive regulator from Helicobacter pylori (strain G27).